Reading from the N-terminus, the 523-residue chain is Probable aminopeptidase NPEPL1 (523 aa).

Zn(2+) contacts are provided by Lys-260 and Asp-265. Residue Lys-272 is part of the active site. Zn(2+) contacts are provided by Asp-283, Asp-342, and Glu-344. Arg-346 is a catalytic residue.

It belongs to the peptidase M17 family. It depends on Zn(2+) as a cofactor. Mn(2+) is required as a cofactor. As to expression, ubiquitously expressed.

Probably catalyzes the removal of unsubstituted N-terminal amino acids from various peptides. The protein is Probable aminopeptidase NPEPL1 (NPEPL1) of Homo sapiens (Human).